Consider the following 443-residue polypeptide: 5-methylthioadenosine/S-adenosylhomocysteine deaminase (443 aa).

Zn(2+) is bound by residues H74 and H76. 2 residues coordinate substrate: E103 and H196. Residue H223 coordinates Zn(2+). Positions 226 and 311 each coordinate substrate. Zn(2+) is bound at residue D311.

This sequence belongs to the metallo-dependent hydrolases superfamily. MTA/SAH deaminase family. The cofactor is Zn(2+).

It catalyses the reaction S-adenosyl-L-homocysteine + H2O + H(+) = S-inosyl-L-homocysteine + NH4(+). The catalysed reaction is S-methyl-5'-thioadenosine + H2O + H(+) = S-methyl-5'-thioinosine + NH4(+). In terms of biological role, catalyzes the deamination of 5-methylthioadenosine and S-adenosyl-L-homocysteine into 5-methylthioinosine and S-inosyl-L-homocysteine, respectively. Is also able to deaminate adenosine. The chain is 5-methylthioadenosine/S-adenosylhomocysteine deaminase from Haloquadratum walsbyi (strain DSM 16790 / HBSQ001).